A 360-amino-acid chain; its full sequence is LETM1 domain-containing protein 1 (360 aa).

A required and sufficient for mitochondrial import region spans residues 1–110 (MALSRVCWAR…KKARRIKTNM (110 aa)). Over 1–137 (MALSRVCWAR…LRQFRQDVTK (137 aa)) the chain is Cytoplasmic. A helical membrane pass occupies residues 138-158 (CLFLGIISIPPFANYLVFLLM). Over 159–360 (YLFPRQLLIR…LSTNYLGTRR (202 aa)) the chain is Mitochondrial intermembrane. A Letm1 RBD domain is found at 186-360 (FRKQSHPEII…LSTNYLGTRR (175 aa)).

In terms of assembly, interacts with BRI3BP. Interacts (via C-terminal) with SMARCA4; the interaction regulates transcriptional expression of thermogenic genes in brown adipose tissue. Kidney, liver, skeletal muscle, heart and brain. Overexpressed in various tumors including leukemia, lymphoma, and carcinomas of the breast, kidney, ovary, stomach, colon and uterine cervix.

The protein localises to the mitochondrion outer membrane. It localises to the nucleus. It is found in the mitochondrion inner membrane. Functionally, plays an essential role for mitochondrial structure and function, as well as thermogenesis of brown adipocytes. In brown adipose tissue also localizes in the nucleus where it interacts with the chromatin remodeler SMARCA4 to regulate thermogenic genes expression, such as UCP1. May regulate phagocytosis and inflammatory responses to lipopolysaccharide in macrophages. Involved in tumorigenesis and may function as a negative regulator of the p53/TP53. In Homo sapiens (Human), this protein is LETM1 domain-containing protein 1.